Consider the following 1004-residue polypeptide: uncharacterized protein (1004 aa).

An N-linked (GlcNAc...) asparagine glycan is attached at Asn27. 4 helical membrane-spanning segments follow: residues 38–58 (FGFSLNPVLWCLDHQQGLLAI), 77–97 (IVPDCSTIVHIALCAAYLIVI), 188–208 (LSPVVSVQIHPKDLGVILIAY), and 324–344 (FILMLGGLPKEAPVKGISLFS). N-linked (GlcNAc...) asparagine glycans are attached at residues Asn392, Asn418, and Asn421. Helical transmembrane passes span 422–442 (MSLSIPPSLCFLASDFRVIAF) and 599–619 (MSNIGFVCIGYQDGGITIIDM). N-linked (GlcNAc...) asparagine glycosylation is present at Asn627. 2 helical membrane passes run 726–746 (GYPLPQEVFLVYIGDSGISVF) and 823–843 (GDYIFPTLGAHELAFGCVLGS). Asn859 carries N-linked (GlcNAc...) asparagine glycosylation.

It to yeast YPR031w.

The protein localises to the membrane. This is an uncharacterized protein from Schizosaccharomyces pombe (strain 972 / ATCC 24843) (Fission yeast).